The following is an 87-amino-acid chain: UPF0335 protein RL4065 (87 aa).

Belongs to the UPF0335 family.

This is UPF0335 protein RL4065 from Rhizobium johnstonii (strain DSM 114642 / LMG 32736 / 3841) (Rhizobium leguminosarum bv. viciae).